We begin with the raw amino-acid sequence, 492 residues long: uncharacterized protein (492 aa).

Gly-266 to Ser-273 is an ATP binding site.

It belongs to the AAA ATPase family. Highly divergent.

Its subcellular location is the plastid. The protein resides in the chloroplast. This is an uncharacterized protein from Pyropia yezoensis (Susabi-nori).